The primary structure comprises 575 residues: Probable lysosomal cobalamin transporter (575 aa).

Helical transmembrane passes span Leu-8–Ile-28, Ile-46–Val-66, Leu-95–Val-115, Tyr-144–Ile-164, and Ala-188–Thr-208. Residue Asn-233 is glycosylated (N-linked (GlcNAc...) asparagine). The next 4 helical transmembrane spans lie at Leu-314 to Ala-334, Ala-376 to Val-396, Val-420 to Val-440, and Phe-504 to Ile-524. Residues Gln-537 to Ala-549 show a composition bias toward acidic residues. Positions Gln-537 to Arg-556 are disordered.

It belongs to the LIMR family. LMBRD1 subfamily.

It localises to the lysosome membrane. Probable lysosomal cobalamin transporter. Required to export cobalamin from lysosomes allowing its conversion to cofactors. The sequence is that of Probable lysosomal cobalamin transporter from Emericella nidulans (strain FGSC A4 / ATCC 38163 / CBS 112.46 / NRRL 194 / M139) (Aspergillus nidulans).